A 468-amino-acid polypeptide reads, in one-letter code: Interstitial collagenase (468 aa).

A signal peptide spans methionine 1–glycine 18. The propeptide at phenylalanine 19 to glutamine 98 is activation peptide. The Cysteine switch motif lies at proline 89–valine 96. Cysteine 91 contributes to the Zn(2+) binding site. N-linked (GlcNAc...) asparagine glycosylation is present at asparagine 119. Residues aspartate 123 and aspartate 157 each contribute to the Ca(2+) site. Zn(2+) contacts are provided by histidine 167 and aspartate 169. Ca(2+)-binding residues include aspartate 174, glycine 175, glutamate 177, and glutamine 179. Histidine 182 is a binding site for Zn(2+). Ca(2+) is bound by residues glycine 189, glycine 191, and aspartate 193. Histidine 195 contributes to the Zn(2+) binding site. Residues aspartate 197, glutamate 198, and aspartate 200 each coordinate Ca(2+). Histidine 217 lines the Zn(2+) pocket. The active site involves glutamate 218. Residues histidine 221 and histidine 227 each contribute to the Zn(2+) site. Residue threonine 273 is modified to Phosphothreonine. Hemopexin repeat units follow at residues proline 274–leucine 323, proline 324–proline 370, valine 373–isoleucine 421, and glycine 422–cysteine 465. Cysteine 277 and cysteine 465 are oxidised to a cystine. The Ca(2+) site is built by aspartate 284 and glutamine 328. Phosphotyrosine; by PKDCC is present on tyrosine 359. Residues aspartate 377 and aspartate 426 each contribute to the Ca(2+) site.

Belongs to the peptidase M10A family. Requires Ca(2+) as cofactor. Zn(2+) is required as a cofactor. Post-translationally, tyrosine phosphorylated in platelets by PKDCC/VLK.

It is found in the secreted. The protein localises to the extracellular space. It localises to the extracellular matrix. The enzyme catalyses Cleavage of the triple helix of collagen at about three-quarters of the length of the molecule from the N-terminus, at 775-Gly-|-Ile-776 in the alpha1(I) chain. Cleaves synthetic substrates and alpha-macroglobulins at bonds where P1' is a hydrophobic residue.. With respect to regulation, can be activated without removal of the activation peptide. Its function is as follows. Cleaves collagens of types I, II, and III at one site in the helical domain. Also cleaves collagens of types VII and X. The sequence is that of Interstitial collagenase (MMP1) from Oryctolagus cuniculus (Rabbit).